The chain runs to 235 residues: Large ribosomal subunit protein uL1 (235 aa).

The protein belongs to the universal ribosomal protein uL1 family. As to quaternary structure, part of the 50S ribosomal subunit.

Its function is as follows. Binds directly to 23S rRNA. The L1 stalk is quite mobile in the ribosome, and is involved in E site tRNA release. Protein L1 is also a translational repressor protein, it controls the translation of the L11 operon by binding to its mRNA. This chain is Large ribosomal subunit protein uL1, found in Prochlorococcus marinus (strain AS9601).